A 279-amino-acid polypeptide reads, in one-letter code: 2'-N-acetylparomamine deacetylase (279 aa).

Zn(2+)-binding residues include histidine 31, aspartate 34, and histidine 157. Positions 245–279 (PRRWTGGTAGAGHAAGRRGAPHTERVWTPAPAGAR) are disordered. The segment covering 246-258 (RRWTGGTAGAGHA) has biased composition (low complexity).

The protein belongs to the PIGL family. It depends on Zn(2+) as a cofactor.

The catalysed reaction is 2'-N-acetylparomamine + H2O = paromamine + acetate. It catalyses the reaction 2'''-acetyl-6'''-hydroxyneomycin C + H2O = 6'''-deamino-6'''-hydroxyneomycin C + acetate. It participates in antibiotic biosynthesis; neomycin biosynthesis. Functionally, deacetylase involved in the biosynthesis of neomycin by mediating 2 steps of the pathway. Deacetylates both 2'-N-acetylparomamine and 2'''-acetyl-6'''-hydroxyneomycin C. This chain is 2'-N-acetylparomamine deacetylase (neoL), found in Streptomyces fradiae (Streptomyces roseoflavus).